The following is a 536-amino-acid chain: Phosphoenolpyruvate carboxykinase (ATP) (536 aa).

Positions 61, 195, and 201 each coordinate substrate. ATP-binding positions include Lys201, His220, and 236-244 (GLSGTGKTT). The Mn(2+) site is built by Lys201 and His220. Mn(2+) is bound at residue Asp257. ATP-binding residues include Glu285, Arg322, and Thr447. Substrate is bound at residue Arg322.

The protein belongs to the phosphoenolpyruvate carboxykinase (ATP) family. Mn(2+) is required as a cofactor.

The protein localises to the cytoplasm. It carries out the reaction oxaloacetate + ATP = phosphoenolpyruvate + ADP + CO2. It participates in carbohydrate biosynthesis; gluconeogenesis. Functionally, involved in the gluconeogenesis. Catalyzes the conversion of oxaloacetate (OAA) to phosphoenolpyruvate (PEP) through direct phosphoryl transfer between the nucleoside triphosphate and OAA. This Chelativorans sp. (strain BNC1) protein is Phosphoenolpyruvate carboxykinase (ATP).